The following is a 478-amino-acid chain: D-ribulose kinase (478 aa).

The transit peptide at 1–38 (MLILRQFQISSFELFQSPKQTGFYSSSRSVPLPRTRFY) directs the protein to the chloroplast. Substrate is bound by residues Asp60, 64 to 67 (SGGR), and Asp278. ATP contacts are provided by residues Ser300, Gly338, and 433-437 (GGAKN).

It belongs to the FGGY kinase family. A divalent metal cation serves as cofactor.

Its subcellular location is the plastid. It is found in the chloroplast. It catalyses the reaction D-ribulose + ATP = D-ribulose 5-phosphate + ADP + H(+). Its function is as follows. Exhibits ATP hydrolysis without substrate. Can phosphorylate D-ribulose with low efficiency. The chain is D-ribulose kinase from Arabidopsis thaliana (Mouse-ear cress).